The chain runs to 101 residues: uncharacterized protein (101 aa).

Helical transmembrane passes span 10–32, 45–67, and 77–99; these read FLPNFLLLGAGTALVLCLVFFLY, LGIWGSAVGLLMDTISLWNLPLI, and IAFTIWMVCAYCMYLLIPLILSH.

It is found in the cell membrane. This is an uncharacterized protein from Bacillus subtilis (strain 168).